The chain runs to 303 residues: ATP-dependent Clp protease ATP-binding subunit CLPT3, chloroplastic (303 aa).

The N-terminal 37 residues, 1 to 37, are a transit peptide targeting the chloroplast; sequence MLLANAPHNGCSRLQQVTLLRASGAKLHRKRALTVVA. Disordered stretches follow at residues 185-214 and 278-303; these read ASTEQVDGSGMAANSRGSTSGSEQPPRDSD and RDDNAFRQAHQNTAMATGPDPDDEYE.

The protein belongs to the ClpA/ClpB family.

It is found in the plastid. The protein resides in the chloroplast. Functionally, accessory protein regulating the assembly of the plastid Clp protease system. This is ATP-dependent Clp protease ATP-binding subunit CLPT3, chloroplastic from Chlamydomonas reinhardtii (Chlamydomonas smithii).